The primary structure comprises 1849 residues: Brefeldin A-inhibited guanine nucleotide-exchange protein 1 (1849 aa).

Residues 2–224 form a DCB; DCB:DCB domain and DCB:HUS domain interaction region; sequence YEGKKTKNMF…QEAKQMEKER (223 aa). Basic and acidic residues predominate over residues 46-58; the sequence is AETEKQSPPHGEA. Disordered regions lie at residues 46-65, 216-248, 267-302, and 378-413; these read AETE…SSTL, EAKQ…QLRY, LHTN…DQAT, and TPIS…SPGA. Ser-52 carries the post-translational modification Phosphoserine. The span at 267–277 shows a compositional bias: basic and acidic residues; it reads LHTNDVDKSLQ. Ser-286, Ser-289, Ser-290, Ser-397, and Ser-410 each carry phosphoserine. Residues 394–409 show a composition bias toward polar residues; the sequence is SVSSNDTQESGNSSGP. Positions 557–577 are HUS; DCB:HUS domain interaction; that stretch reads ADAQSVVDIYVNYDCDLNAAN. One can recognise an SEC7 domain in the interval 709 to 840; sequence FNKKPKRGIQ…IIMLTTDLHS (132 aa). Positions 711-715 match the Nuclear localization signal (NLS) motif; the sequence is KKPKR. Position 1079 is a phosphoserine (Ser-1079). The disordered stretch occupies residues 1543–1562; that stretch reads RPNSGETAPPPPSPVSEKPL. Phosphoserine occurs at positions 1566 and 1569.

As to quaternary structure, homodimer. Interacts with ARFGEF2/BIG2; both proteins are probably part of the same or very similar macromolecular complexes. Interacts with FKBP2. Interacts with MYO9B. Interacts with PRKAR1A and PRKAR2A. Interacts with PPP1CC. Interacts with NCL, FBL, NUP62 and U3 small nucleolar RNA. Interacts with DPY30. Interacts with PDE3A. Interacts with KANK1. Interacts with TBC1D22A and TBC1D22B. Interacts (via N-terminus) with ARL1. In terms of processing, phosphorylated. In vitro phosphorylated by PKA reducing its GEF activity and dephosphorylated by phosphatase PP1. Expressed in placenta, lung, heart, brain, kidney and pancreas.

The protein localises to the cytoplasm. It is found in the perinuclear region. The protein resides in the golgi apparatus. It localises to the trans-Golgi network membrane. Its subcellular location is the nucleus. The protein localises to the nucleolus. It is found in the nucleus matrix. With respect to regulation, inhibited by brefeldin A. Promotes guanine-nucleotide exchange on ARF1 and ARF3. Promotes the activation of ARF1/ARF3 through replacement of GDP with GTP. Involved in vesicular trafficking. Required for the maintenance of Golgi structure; the function may be independent of its GEF activity. Required for the maturation of integrin beta-1 in the Golgi. Involved in the establishment and persistence of cell polarity during directed cell movement in wound healing. Proposed to act as A kinase-anchoring protein (AKAP) and may mediate crosstalk between Arf and PKA pathways. Inhibits GAP activity of MYO9B probably through competitive RhoA binding. The function in the nucleus remains to be determined. This is Brefeldin A-inhibited guanine nucleotide-exchange protein 1 (ARFGEF1) from Homo sapiens (Human).